A 299-amino-acid chain; its full sequence is Ciliary microtubule inner protein 2B (299 aa).

The protein belongs to the CIMIP2 family. In terms of tissue distribution, expressed in airway epithelial cells.

It is found in the cytoplasm. It localises to the cytoskeleton. The protein resides in the cilium axoneme. Its function is as follows. Microtubule inner protein (MIP) part of the dynein-decorated doublet microtubules (DMTs) in cilia axoneme, which is required for motile cilia beating. The protein is Ciliary microtubule inner protein 2B (cimip2b) of Danio rerio (Zebrafish).